Consider the following 287-residue polypeptide: Large ribosomal subunit protein uL2 (287 aa).

The interval 221–287 (RGSVMNPCDH…SKRSRGGRDS (67 aa)) is disordered. Residues 258–287 (KTRKRNKPSNKFVLRKRRKTSKRSRGGRDS) show a composition bias toward basic residues.

Belongs to the universal ribosomal protein uL2 family. Part of the 50S ribosomal subunit. Forms a bridge to the 30S subunit in the 70S ribosome.

Functionally, one of the primary rRNA binding proteins. Required for association of the 30S and 50S subunits to form the 70S ribosome, for tRNA binding and peptide bond formation. It has been suggested to have peptidyltransferase activity; this is somewhat controversial. Makes several contacts with the 16S rRNA in the 70S ribosome. This Synechococcus sp. (strain CC9311) protein is Large ribosomal subunit protein uL2.